Consider the following 173-residue polypeptide: MKMHMKHLDLYSQAIKTLRWTQPMRALSTVNTSSGVQGNLSPAAPAPEPDKLYSKLEIELRGIDPAVLKSYTWFATTAAEHLGIEKGKCWSPRKAHHERMTLLKSVHIYKKHRVQYEVRTHFRYMNFHKLTGSTLDTFLEYIERNLPEGVALQASRTELQEIPEHLRQPPEQV.

The protein belongs to the universal ribosomal protein uS10 family. Component of the mitochondrial ribosome small subunit (28S) which comprises a 12S rRNA and about 30 distinct proteins.

It is found in the mitochondrion. In Drosophila melanogaster (Fruit fly), this protein is Small ribosomal subunit protein uS10m (mRpS10).